Reading from the N-terminus, the 439-residue chain is MRFRLALSLLSLALFAAPAAAQLEVDITGGIAQPMPIAIPGMPTPAVANTPAGDTAALGQRVADVVTNDLKNSGLFSPLPKSALQTVTHPQVTAPDYMFWTQSGAQALIQGFVQANGDGSLTVGCYLYDVLARTELTRQGFVVQPAQWRRAAHKCADLVYTRLTGEGPYFDSRVVYVSETGPKTNRIKRLAIMDQDGANHRFLTNGQTIVLTPRFAPNQQTITYMSYTNNRARVYVYDIGSGSQRLVVDQPNMTFAPRFSPDGRTIVFSMAVGGNTDIYRVSAGGGTPQRLTTSPGIDTGASYSPDGSKIVFESDRSGTQQLYVMNADGSNQNRISFGSGRYGSAAWSPRGDLIAFTKIGGGFNVGIMNIDGSGEKILTNGWQDEGPSWSPNGRVIMFFRTAQGSGKADLWSVDLTGVNERPVPTPLDGSDPAWGPLLP.

The first 21 residues, 1–21, serve as a signal peptide directing secretion; sequence MRFRLALSLLSLALFAAPAAA.

It belongs to the TolB family. As to quaternary structure, the Tol-Pal system is composed of five core proteins: the inner membrane proteins TolA, TolQ and TolR, the periplasmic protein TolB and the outer membrane protein Pal. They form a network linking the inner and outer membranes and the peptidoglycan layer.

The protein localises to the periplasm. In terms of biological role, part of the Tol-Pal system, which plays a role in outer membrane invagination during cell division and is important for maintaining outer membrane integrity. The polypeptide is Tol-Pal system protein TolB (Rhizorhabdus wittichii (strain DSM 6014 / CCUG 31198 / JCM 15750 / NBRC 105917 / EY 4224 / RW1) (Sphingomonas wittichii)).